A 390-amino-acid chain; its full sequence is MRYITAGESHGPQLTTIIEGVPAGLSLVADDINEELARRQKGYGRGRRMQIETDQVQILSGVRHGETLGSPIALVVENRDFAHWTKIMGAEPLTEQEEKEMKRKVTKPRPGHADLNGAIKYGHRDMRNVLERSSARETTVRVAAGAVAKKVLAELGIKVAGHVIEIGGVQAKEITYSSIEELKSITEASPVRCLDDEAGNQMMKAIDDAKANGDSIGGIVEVIVEGMPIGVGSYVHYDRKLDAKLAAAIMSINAFKGVEIGIGFEAAHRPGSEVHDEILWNEEHGYTRRTNNAGGLEGGMTTGMPIVVRGVMKPIPTLYKPLQSVDIDTKEPFTASIERSDSCAVPAASVVAEAVVAWELATALIEQFGLDRMELIRENIEKHNEYARGF.

NADP(+) is bound by residues Arg-39 and Arg-45. The interval 95-117 (EQEEKEMKRKVTKPRPGHADLNG) is disordered. FMN-binding positions include 132-134 (RSS), 253-254 (NA), Gly-298, 313-317 (KPIPT), and Arg-339.

It belongs to the chorismate synthase family. As to quaternary structure, homotetramer. FMNH2 serves as cofactor.

The catalysed reaction is 5-O-(1-carboxyvinyl)-3-phosphoshikimate = chorismate + phosphate. Its pathway is metabolic intermediate biosynthesis; chorismate biosynthesis; chorismate from D-erythrose 4-phosphate and phosphoenolpyruvate: step 7/7. Functionally, catalyzes the anti-1,4-elimination of the C-3 phosphate and the C-6 proR hydrogen from 5-enolpyruvylshikimate-3-phosphate (EPSP) to yield chorismate, which is the branch point compound that serves as the starting substrate for the three terminal pathways of aromatic amino acid biosynthesis. This reaction introduces a second double bond into the aromatic ring system. This chain is Chorismate synthase 1, found in Bacillus cereus (strain ATCC 14579 / DSM 31 / CCUG 7414 / JCM 2152 / NBRC 15305 / NCIMB 9373 / NCTC 2599 / NRRL B-3711).